The primary structure comprises 230 residues: Orotidine 5'-phosphate decarboxylase (230 aa).

Residues Asp8, Lys30, Asp59–Thr68, Thr118, Arg178, Gln187, Gly207, and Arg208 contribute to the substrate site. Residue Lys61 is the Proton donor of the active site.

This sequence belongs to the OMP decarboxylase family. Type 1 subfamily. Homodimer.

It carries out the reaction orotidine 5'-phosphate + H(+) = UMP + CO2. It functions in the pathway pyrimidine metabolism; UMP biosynthesis via de novo pathway; UMP from orotate: step 2/2. In terms of biological role, catalyzes the decarboxylation of orotidine 5'-monophosphate (OMP) to uridine 5'-monophosphate (UMP). The polypeptide is Orotidine 5'-phosphate decarboxylase (Sulfurovum sp. (strain NBC37-1)).